Consider the following 125-residue polypeptide: Small ribosomal subunit protein uS12m (125 aa).

It belongs to the universal ribosomal protein uS12 family. In terms of assembly, component of the mitochondrial ribosome small subunit.

The protein localises to the mitochondrion. Its function is as follows. Protein S12 is involved in the translation initiation step. This chain is Small ribosomal subunit protein uS12m (RPS12), found in Arabidopsis thaliana (Mouse-ear cress).